The following is a 220-amino-acid chain: Protein-L-isoaspartate O-methyltransferase (220 aa).

Residue Ser-67 is part of the active site.

This sequence belongs to the methyltransferase superfamily. L-isoaspartyl/D-aspartyl protein methyltransferase family.

The protein localises to the cytoplasm. It carries out the reaction [protein]-L-isoaspartate + S-adenosyl-L-methionine = [protein]-L-isoaspartate alpha-methyl ester + S-adenosyl-L-homocysteine. Catalyzes the methyl esterification of L-isoaspartyl residues in peptides and proteins that result from spontaneous decomposition of normal L-aspartyl and L-asparaginyl residues. It plays a role in the repair and/or degradation of damaged proteins. This chain is Protein-L-isoaspartate O-methyltransferase, found in Chlorobium phaeobacteroides (strain BS1).